The chain runs to 194 residues: BCL2/adenovirus E1B 19 kDa protein-interacting protein 3 (194 aa).

The segment at 1–102 (MSQNGAPGMQ…SQSEEDDIER (102 aa)) is disordered. Over residues 42 to 55 (DMEKILLDAQHESG) the composition is skewed to basic and acidic residues. Ser54, Ser66, Ser86, Ser92, and Ser95 each carry phosphoserine. The span at 56-69 (RSSSKSSHCDSPPR) shows a compositional bias: low complexity. Positions 78–88 (RASETDTHSIG) are enriched in basic and acidic residues. The BH3 signature appears at 100–125 (IERRKEVESILKKNSDWIWDWSSRPE). Residues 164–184 (VFLPSLLLSHLLAIGLGIYIG) form a helical membrane-spanning segment.

It belongs to the NIP3 family. As to quaternary structure, homodimer. Binds to BCL2. Interacts with BNIP3L and ACAA2. Interacts (via BH3 domain) with SPATA18 (via coiled-coil domains). Interacts with BOK; promotes BOK oligomerization. Interacts with PPTC7; this interaction promotes BNIP3 degradation. In terms of assembly, (Microbial infection) Interacts with adenovirus E1B 19 kDa protein. (Microbial infection) Interacts with Epstein-Barr virus BHRF1.

The protein resides in the mitochondrion. Its subcellular location is the mitochondrion outer membrane. Functionally, apoptosis-inducing protein that can overcome BCL2 suppression. May play a role in repartitioning calcium between the two major intracellular calcium stores in association with BCL2. Involved in mitochondrial quality control via its interaction with SPATA18/MIEAP: in response to mitochondrial damage, participates in mitochondrial protein catabolic process (also named MALM) leading to the degradation of damaged proteins inside mitochondria. The physical interaction of SPATA18/MIEAP, BNIP3 and BNIP3L/NIX at the mitochondrial outer membrane regulates the opening of a pore in the mitochondrial double membrane in order to mediate the translocation of lysosomal proteins from the cytoplasm to the mitochondrial matrix. Plays an important role in the calprotectin (S100A8/A9)-induced cell death pathway. This is BCL2/adenovirus E1B 19 kDa protein-interacting protein 3 from Homo sapiens (Human).